Consider the following 495-residue polypeptide: ATP synthase subunit beta, chloroplastic (495 aa).

Glycine 172 to threonine 179 contacts ATP.

This sequence belongs to the ATPase alpha/beta chains family. In terms of assembly, F-type ATPases have 2 components, CF(1) - the catalytic core - and CF(0) - the membrane proton channel. CF(1) has five subunits: alpha(3), beta(3), gamma(1), delta(1), epsilon(1). CF(0) has four main subunits: a(1), b(1), b'(1) and c(9-12).

It is found in the plastid. Its subcellular location is the chloroplast thylakoid membrane. It catalyses the reaction ATP + H2O + 4 H(+)(in) = ADP + phosphate + 5 H(+)(out). Its function is as follows. Produces ATP from ADP in the presence of a proton gradient across the membrane. The catalytic sites are hosted primarily by the beta subunits. The sequence is that of ATP synthase subunit beta, chloroplastic from Eucomis bicolor (King's flower).